Here is a 425-residue protein sequence, read N- to C-terminus: O-methyltransferase AMT9 (425 aa).

S-adenosyl-L-methionine contacts are provided by residues 257 to 258 (GG), Asp280, 306 to 307 (DF), Arg322, and Arg323. Catalysis depends on His326, which acts as the Proton acceptor.

Belongs to the class I-like SAM-binding methyltransferase superfamily. Cation-independent O-methyltransferase family.

It participates in mycotoxin biosynthesis. In terms of biological role, O-methyltransferase; part of the gene clusters that mediate the biosynthesis of AM-toxins, host-selective toxins (HSTs) causing Alternaria blotch on apple, a worldwide distributed disease. AM-toxins are cyclic depsipeptides containing the 3 residues 2-hydroxy-isovaleric acid (2-HIV), dehydroalanine, L-alanine which are common for all 3 AM-toxins I to III. The fourth precursor is L-alpha-amino-methoxyphenyl-valeric acid (L-Amv) for AM-toxin I, L-alpha-amino-phenyl-valeric acid (L-Apv) for AM-toxin II, and L-alpha-amino-hydroxyphenyl-valeric acid (L-Ahv) for AM-toxin III. AM-toxins have two target sites for affecting susceptible apple cells; they cause invagination of the plasma membrane and electrolyte loss and chloroplast disorganization. The non-ribosomal peptide synthetase AMT1 contains 4 catalytic modules and is responsible for activation of each residue in AM-toxin. The aldo-keto reductase AMT2 catalyzes the conversion of 2-keto-isovaleric acid (2-KIV) to 2-hydroxy-isovaleric acid (2-HIV), one of the precursor residues incorporated by AMT1 during AM-toxin biosynthesis, by reduction of its ketone to an alcohol. The cytochrome P450 monooxygenase AMT3 and the thioesterase AMT4 are also important for AM-toxin production, but their exact function within the AM-toxin biosynthesis are not known yet. Up to 21 proteins (including AMT1 to AMT4) are predicted to be involved in AM-toxin biosynthesis since their expression ishighly up-regulated in AM-toxin-producing cultures. This chain is O-methyltransferase AMT9, found in Alternaria alternata (Alternaria rot fungus).